A 382-amino-acid chain; its full sequence is Carbamoyl phosphate synthase small chain (382 aa).

The interval 1–189 (MIKSALLVLE…GLPEAKKEDE (189 aa)) is CPSase. The L-glutamine site is built by Ser-47, Gly-241, and Gly-243. Residues 193 to 380 (HVVAYDFGAK…IELIEQYRKT (188 aa)) form the Glutamine amidotransferase type-1 domain. The Nucleophile role is filled by Cys-269. 5 residues coordinate L-glutamine: Leu-270, Gln-273, Asn-311, Gly-313, and Phe-314. Catalysis depends on residues His-353 and Glu-355.

The protein belongs to the CarA family. In terms of assembly, composed of two chains; the small (or glutamine) chain promotes the hydrolysis of glutamine to ammonia, which is used by the large (or ammonia) chain to synthesize carbamoyl phosphate. Tetramer of heterodimers (alpha,beta)4.

The catalysed reaction is hydrogencarbonate + L-glutamine + 2 ATP + H2O = carbamoyl phosphate + L-glutamate + 2 ADP + phosphate + 2 H(+). It catalyses the reaction L-glutamine + H2O = L-glutamate + NH4(+). It functions in the pathway amino-acid biosynthesis; L-arginine biosynthesis; carbamoyl phosphate from bicarbonate: step 1/1. It participates in pyrimidine metabolism; UMP biosynthesis via de novo pathway; (S)-dihydroorotate from bicarbonate: step 1/3. Its function is as follows. Small subunit of the glutamine-dependent carbamoyl phosphate synthetase (CPSase). CPSase catalyzes the formation of carbamoyl phosphate from the ammonia moiety of glutamine, carbonate, and phosphate donated by ATP, constituting the first step of 2 biosynthetic pathways, one leading to arginine and/or urea and the other to pyrimidine nucleotides. The small subunit (glutamine amidotransferase) binds and cleaves glutamine to supply the large subunit with the substrate ammonia. This Escherichia coli O157:H7 protein is Carbamoyl phosphate synthase small chain.